Reading from the N-terminus, the 405-residue chain is S-adenosylmethionine synthase (405 aa).

Residue 141-146 (GQGSVD) participates in ATP binding.

The protein belongs to the AdoMet synthase 2 family. The cofactor is Mg(2+).

It catalyses the reaction L-methionine + ATP + H2O = S-adenosyl-L-methionine + phosphate + diphosphate. It functions in the pathway amino-acid biosynthesis; S-adenosyl-L-methionine biosynthesis; S-adenosyl-L-methionine from L-methionine: step 1/1. Catalyzes the formation of S-adenosylmethionine from methionine and ATP. The polypeptide is S-adenosylmethionine synthase (Methanococcus maripaludis (Methanococcus deltae)).